We begin with the raw amino-acid sequence, 180 residues long: Shikimate kinase (180 aa).

Residue 14-19 coordinates ATP; that stretch reads GAGKST. Mg(2+) is bound at residue serine 18. Residues aspartate 36, arginine 60, and glycine 82 each coordinate substrate. Position 120 (arginine 120) interacts with ATP. Position 140 (arginine 140) interacts with substrate. An ATP-binding site is contributed by glutamine 157.

Belongs to the shikimate kinase family. As to quaternary structure, monomer. It depends on Mg(2+) as a cofactor.

The protein localises to the cytoplasm. It carries out the reaction shikimate + ATP = 3-phosphoshikimate + ADP + H(+). Its pathway is metabolic intermediate biosynthesis; chorismate biosynthesis; chorismate from D-erythrose 4-phosphate and phosphoenolpyruvate: step 5/7. Its function is as follows. Catalyzes the specific phosphorylation of the 3-hydroxyl group of shikimic acid using ATP as a cosubstrate. In Haemophilus influenzae (strain PittEE), this protein is Shikimate kinase.